A 67-amino-acid polypeptide reads, in one-letter code: Protein SlyX homolog (67 aa).

Belongs to the SlyX family.

The protein is Protein SlyX homolog of Thiobacillus denitrificans (strain ATCC 25259 / T1).